A 79-amino-acid chain; its full sequence is D-alanyl carrier protein (79 aa).

Residues 1–77 (MDTKQGVLDI…KIVAKVESLE (77 aa)) enclose the Carrier domain. Serine 35 carries the O-(pantetheine 4'-phosphoryl)serine modification.

It belongs to the DltC family. 4'-phosphopantetheine is transferred from CoA to a specific serine of apo-DCP.

The protein localises to the cytoplasm. The protein operates within cell wall biogenesis; lipoteichoic acid biosynthesis. Functionally, carrier protein involved in the D-alanylation of lipoteichoic acid (LTA). The loading of thioester-linked D-alanine onto DltC is catalyzed by D-alanine--D-alanyl carrier protein ligase DltA. The DltC-carried D-alanyl group is further transferred to cell membrane phosphatidylglycerol (PG) by forming an ester bond, probably catalyzed by DltD. D-alanylation of LTA plays an important role in modulating the properties of the cell wall in Gram-positive bacteria, influencing the net charge of the cell wall. In Lactobacillus acidophilus (strain ATCC 700396 / NCK56 / N2 / NCFM), this protein is D-alanyl carrier protein.